A 258-amino-acid polypeptide reads, in one-letter code: U6 snRNA phosphodiesterase 1 (258 aa).

Positions 1 to 20 (MALVDYGGSSSSASEDEDCT) are disordered. His-117 acts as the Proton acceptor in catalysis. AMP-binding positions include 117–119 (HLS), Tyr-200, and 202–208 (PASFHVS). Residues Tyr-200 and 204-208 (SFHVS) contribute to the UMP site. His-206 serves as the catalytic Proton donor.

The protein belongs to the 2H phosphoesterase superfamily. USB1 family.

Its subcellular location is the nucleus. It catalyses the reaction a 3'-end uridylyl-uridine-RNA = a 3'-end 2',3'-cyclophospho-uridine-RNA + uridine. Functionally, 3'-5' RNA exonuclease that trims the 3' end of oligo(U) tracts of the pre-U6 small nuclear RNA (snRNA) molecule, leading to the formation of a mature U6 snRNA 3' end-terminated with a 2',3'-cyclic phosphate. Participates in the U6 snRNA 3' end processing that prevents U6 snRNA degradation. This chain is U6 snRNA phosphodiesterase 1, found in Drosophila melanogaster (Fruit fly).